The primary structure comprises 72 residues: Gas vesicle protein A (72 aa).

Belongs to the gas vesicle GvpA family. The gas vesicle shell is 2 nm thick and consists of a single layer of this protein. It forms helical ribs nearly perpendicular to the long axis of the vesicle.

The protein localises to the gas vesicle shell. Its function is as follows. Gas vesicles are hollow, gas filled proteinaceous nanostructures found in some microorganisms. During planktonic growth they allow positioning of the organism at a favorable depth for light or nutrient acquisition. GvpA forms the protein shell. This is Gas vesicle protein A from Synechococcus sp. (strain JA-3-3Ab) (Cyanobacteria bacterium Yellowstone A-Prime).